A 668-amino-acid chain; its full sequence is Major S-layer protein (668 aa).

An N-terminal signal peptide occupies residues 1–24 (MKRFAAVTLAALMLLTVFASAASA). 10 N-linked (GlcNAc...) asparagine glycosylation sites follow: Asn36, Asn65, Asn111, Asn265, Asn583, Asn596, Asn602, Asn608, Asn617, and Asn635. The tract at residues 584–650 (ETTSITKPDE…ESNGSPGFGV (67 aa)) is disordered. Over residues 596–611 (NETVSDNETMPDNTSS) the composition is skewed to polar residues. A compositionally biased stretch (acidic residues) spans 631–641 (EPTDNETEPDE). The helical transmembrane segment at 644-664 (GSPGFGVVLGLAGLLGVVYLV) threads the bilayer.

Belongs to the Methanosarcinales S-layer protein family. Glycosylated.

The protein localises to the secreted. Its subcellular location is the cell wall. It is found in the S-layer. The protein resides in the cell membrane. Functionally, S-layer protein. The S-layer is a paracrystalline mono-layered assembly of proteins which coat the surface of the cell. In Methanosarcina barkeri (strain Fusaro / DSM 804), this protein is Major S-layer protein.